The primary structure comprises 94 residues: uncharacterized protein (94 aa).

This is an uncharacterized protein from Bacillus subtilis (strain 168).